The following is a 536-amino-acid chain: Heparanase-like protein 3 (536 aa).

The first 24 residues, 1 to 24 (MAYRQILAIVLFLCVFQFLDCTVS), serve as a signal peptide directing secretion. Residues N30, N122, N176, and N191 are each glycosylated (N-linked (GlcNAc...) asparagine). E202 (proton donor) is an active-site residue. Residues N265 and N308 are each glycosylated (N-linked (GlcNAc...) asparagine). E319 acts as the Nucleophile in catalysis. Residues N370, N427, N438, and N510 are each glycosylated (N-linked (GlcNAc...) asparagine).

The protein belongs to the glycosyl hydrolase 79 family.

The protein localises to the lysosome membrane. Its subcellular location is the secreted. Functionally, endoglycosidase which is a cell surface and extracellular matrix-degrading enzyme. Cleaves heparan sulfate proteoglycans (HSPGs) into heparan sulfate side chains and core proteoglycans. The chain is Heparanase-like protein 3 from Arabidopsis thaliana (Mouse-ear cress).